The chain runs to 941 residues: Endoglucanase (941 aa).

The first 29 residues, 1–29 (MKIKQIKQSLSLLLIITLIMSLFVPMASA), serve as a signal peptide directing secretion. 3 SLH domains span residues 37-94 (NAFP…GLEA), 95-158 (SSKD…LSLP), and 161-224 (QREY…DYLY). Glutamate 373 functions as the Proton donor in the catalytic mechanism. The Nucleophile role is filled by glutamate 485.

It belongs to the glycosyl hydrolase 5 (cellulase A) family.

The catalysed reaction is Endohydrolysis of (1-&gt;4)-beta-D-glucosidic linkages in cellulose, lichenin and cereal beta-D-glucans.. This is Endoglucanase from Bacillus sp. (strain KSM-635).